The chain runs to 175 residues: NADH-ubiquinone oxidoreductase chain 6 (175 aa).

5 helical membrane passes run 1-21, 27-47, 49-69, 88-108, and 149-169; these read MMTY…VGFS, VYGG…IMNF, GSFL…VVFG, VVFG…LYVL, and YGMW…VVVM.

Belongs to the complex I subunit 6 family. As to quaternary structure, core subunit of respiratory chain NADH dehydrogenase (Complex I) which is composed of 45 different subunits.

Its subcellular location is the mitochondrion inner membrane. The catalysed reaction is a ubiquinone + NADH + 5 H(+)(in) = a ubiquinol + NAD(+) + 4 H(+)(out). Core subunit of the mitochondrial membrane respiratory chain NADH dehydrogenase (Complex I) which catalyzes electron transfer from NADH through the respiratory chain, using ubiquinone as an electron acceptor. Essential for the catalytic activity and assembly of complex I. The protein is NADH-ubiquinone oxidoreductase chain 6 (MT-ND6) of Pteropus scapulatus (Little red flying fox).